The chain runs to 186 residues: Thymidine kinase (186 aa).

8 to 15 (GPMYSGKT) contributes to the ATP binding site. Residue glutamate 86 is the Proton acceptor of the active site. Residue phenylalanine 118 participates in substrate binding. Residues cysteine 143 and cysteine 146 each coordinate Zn(2+). 162–166 (IIEIG) provides a ligand contact to substrate. Residues cysteine 175 and cysteine 178 each contribute to the Zn(2+) site.

It belongs to the thymidine kinase family.

The catalysed reaction is thymidine + ATP = dTMP + ADP + H(+). The sequence is that of Thymidine kinase (TK) from Choristoneura fumiferana (Spruce budworm moth).